The sequence spans 453 residues: Bifunctional protein GlmU (453 aa).

The tract at residues 1-225 (MNIVILAAGT…EWETLGVNSK (225 aa)) is pyrophosphorylase. UDP-N-acetyl-alpha-D-glucosamine contacts are provided by residues 6–9 (LAAG), Lys20, Gln71, 76–77 (GT), 98–100 (YGD), Gly135, Glu150, Asn165, and Asn223. Asp100 is a binding site for Mg(2+). Asn223 contributes to the Mg(2+) binding site. Residues 226 to 246 (AQLAELERIHQRNLADALLAA) form a linker region. An N-acetyltransferase region spans residues 247–453 (GVTLADPARI…GYVRPVKKKS (207 aa)). Residues Arg329 and Lys347 each coordinate UDP-N-acetyl-alpha-D-glucosamine. The active-site Proton acceptor is the His359. UDP-N-acetyl-alpha-D-glucosamine is bound by residues Tyr362 and Asn373. Residues Ala376, 382–383 (NY), Ser401, and Ala419 each bind acetyl-CoA.

The protein in the N-terminal section; belongs to the N-acetylglucosamine-1-phosphate uridyltransferase family. It in the C-terminal section; belongs to the transferase hexapeptide repeat family. As to quaternary structure, homotrimer. The cofactor is Mg(2+).

The protein localises to the cytoplasm. It catalyses the reaction alpha-D-glucosamine 1-phosphate + acetyl-CoA = N-acetyl-alpha-D-glucosamine 1-phosphate + CoA + H(+). The catalysed reaction is N-acetyl-alpha-D-glucosamine 1-phosphate + UTP + H(+) = UDP-N-acetyl-alpha-D-glucosamine + diphosphate. It participates in nucleotide-sugar biosynthesis; UDP-N-acetyl-alpha-D-glucosamine biosynthesis; N-acetyl-alpha-D-glucosamine 1-phosphate from alpha-D-glucosamine 6-phosphate (route II): step 2/2. The protein operates within nucleotide-sugar biosynthesis; UDP-N-acetyl-alpha-D-glucosamine biosynthesis; UDP-N-acetyl-alpha-D-glucosamine from N-acetyl-alpha-D-glucosamine 1-phosphate: step 1/1. It functions in the pathway bacterial outer membrane biogenesis; LPS lipid A biosynthesis. Catalyzes the last two sequential reactions in the de novo biosynthetic pathway for UDP-N-acetylglucosamine (UDP-GlcNAc). The C-terminal domain catalyzes the transfer of acetyl group from acetyl coenzyme A to glucosamine-1-phosphate (GlcN-1-P) to produce N-acetylglucosamine-1-phosphate (GlcNAc-1-P), which is converted into UDP-GlcNAc by the transfer of uridine 5-monophosphate (from uridine 5-triphosphate), a reaction catalyzed by the N-terminal domain. This Burkholderia mallei (strain NCTC 10247) protein is Bifunctional protein GlmU.